We begin with the raw amino-acid sequence, 471 residues long: UDP-N-acetylmuramate--L-alanine ligase (471 aa).

114–120 lines the ATP pocket; it reads GTHGKTT.

Belongs to the MurCDEF family.

The protein resides in the cytoplasm. The catalysed reaction is UDP-N-acetyl-alpha-D-muramate + L-alanine + ATP = UDP-N-acetyl-alpha-D-muramoyl-L-alanine + ADP + phosphate + H(+). The protein operates within cell wall biogenesis; peptidoglycan biosynthesis. In terms of biological role, cell wall formation. This Sinorhizobium medicae (strain WSM419) (Ensifer medicae) protein is UDP-N-acetylmuramate--L-alanine ligase.